Here is a 339-residue protein sequence, read N- to C-terminus: Sphingomyelinase D (339 aa).

An N-terminal signal peptide occupies residues 1 to 21 (MVSLLRLCSFLLAAGSILVQG). Residue His60 is part of the active site. Residues Glu80, Asp82, and Asp128 each contribute to the Mg(2+) site. The SMD-tail signature appears at 309 to 316 (ATVDDNPW). Residues 313-339 (DNPWSSMSKKGSSKSSWVKGEVPSIAH) form a disordered region. A compositionally biased stretch (low complexity) spans 317-328 (SSMSKKGSSKSS).

Belongs to the sphingomyelinase D/phospholipase D family. Requires Mg(2+) as cofactor.

The protein localises to the secreted. It carries out the reaction a sphingomyelin + H2O = an N-acylsphing-4-enine 1-phosphate + choline + H(+). Its function is as follows. Catalyzes the hydrolysis of sphingomyelin. Sphingomyelinases D are produced by some spider in their venoms, but also by arthropods such as ticks, or pathogenic bacteria and fungi. They might play a role in pathogenicity through different mechanisms, such as membrane destabilization and host cell penetration, but also pulmonary inflammation and cutaneous lesions. This is Sphingomyelinase D from Arthroderma benhamiae (strain ATCC MYA-4681 / CBS 112371) (Trichophyton mentagrophytes).